We begin with the raw amino-acid sequence, 272 residues long: Phosphoglycolate phosphatase (272 aa).

D19 (nucleophile) is an active-site residue. D19, D21, and D182 together coordinate Mg(2+).

The protein belongs to the HAD-like hydrolase superfamily. CbbY/CbbZ/Gph/YieH family. The cofactor is Mg(2+).

The catalysed reaction is 2-phosphoglycolate + H2O = glycolate + phosphate. It participates in organic acid metabolism; glycolate biosynthesis; glycolate from 2-phosphoglycolate: step 1/1. Specifically catalyzes the dephosphorylation of 2-phosphoglycolate. Is involved in the dissimilation of the intracellular 2-phosphoglycolate formed during the DNA repair of 3'-phosphoglycolate ends, a major class of DNA lesions induced by oxidative stress. The protein is Phosphoglycolate phosphatase of Pseudomonas syringae pv. syringae (strain B728a).